Here is a 234-residue protein sequence, read N- to C-terminus: UPF0173 metal-dependent hydrolase RL2074 (234 aa).

This sequence belongs to the UPF0173 family.

The polypeptide is UPF0173 metal-dependent hydrolase RL2074 (Rhizobium johnstonii (strain DSM 114642 / LMG 32736 / 3841) (Rhizobium leguminosarum bv. viciae)).